Here is a 5147-residue protein sequence, read N- to C-terminus: Cadherin-related tumor suppressor (5147 aa).

A signal peptide spans 1 to 35; it reads MERLLLLFFLLLAGRESLCQTGDTKLELLAPRGRS. 34 consecutive Cadherin domains span residues 36-156, 157-270, 271-382, 383-494, 495-599, 600-708, 709-820, 821-942, 943-1049, 1050-1153, 1154-1278, 1279-1384, 1385-1489, 1490-1601, 1602-1713, 1714-1823, 1824-1922, 1923-2027, 2028-2167, 2168-2278, 2279-2385, 2386-2491, 2492-2596, 2597-2703, 2704-2810, 2811-2913, 2914-3013, 3014-3124, 3125-3229, 3230-3334, 3335-3439, 3440-3545, 3546-3651, and 3652-3756; these read YATT…SPEF, PEPS…PPIF, DHSD…DPII, SFRF…EPVF, EKSE…APQF, SQRE…DPQF, YPRH…LEML, ECGQ…APVF, ALDR…TPVF, DHTS…APQF, TNST…APEF, LRAP…APEF, TQSS…PPIF, PSTA…APVF, VSMN…VPQF, EQRS…PPQF, LDTP…PPLF, EDTV…APIF, DPMS…VPVF, ISAN…SPVF, DPKQ…PTFL, DSPY…DPVF, ELQS…IPKF, DSTT…FPTF, AYMA…APVM, EQLI…PPKF, TRLF…APEF, EHSF…PPKF, EQAE…TPRF, SVNS…PPVF, NHKE…YPQF, LQPV…PPEF, IKHY…GPTF, and TPEG…NPST. Residues 36 to 4583 are Extracellular-facing; that stretch reads YATTYEQYAA…GQDAAQVADP (4548 aa). N-linked (GlcNAc...) asparagine glycosylation is found at Asn239, Asn257, Asn276, Asn280, Asn402, and Asn461. Asn605 and Asn631 each carry an N-linked (GlcNAc...) asparagine glycan. Asn1155, Asn1367, and Asn1458 each carry an N-linked (GlcNAc...) asparagine glycan. Asn1751, Asn1831, and Asn1880 each carry an N-linked (GlcNAc...) asparagine glycan. N-linked (GlcNAc...) asparagine glycans are attached at residues Asn2080, Asn2171, Asn2247, Asn2290, Asn2437, and Asn2581. An N-linked (GlcNAc...) asparagine glycan is attached at Asn2799. N-linked (GlcNAc...) asparagine glycosylation is found at Asn2920, Asn2946, and Asn2967. 5 N-linked (GlcNAc...) asparagine glycosylation sites follow: Asn3167, Asn3303, Asn3386, Asn3389, and Asn3525. N-linked (GlcNAc...) asparagine glycosylation is found at Asn3852, Asn3865, and Asn3905. 4 EGF-like domains span residues 3950 to 4011, 4013 to 4049, 4052 to 4090, and 4092 to 4128; these read GYEP…EQCS, RQDP…KHCE, RSDV…NQCE, and VSDS…RHCE. Intrachain disulfides connect Cys3954–Cys3966, Cys3960–Cys3999, Cys4001–Cys4010, Cys4017–Cys4028, Cys4022–Cys4037, Cys4039–Cys4048, Cys4056–Cys4067, Cys4061–Cys4078, Cys4080–Cys4089, Cys4096–Cys4107, Cys4101–Cys4116, Cys4118–Cys4127, Cys4294–Cys4320, Cys4325–Cys4341, Cys4334–Cys4350, and Cys4352–Cys4361. A Laminin G-like 1 domain is found at 4129–4320; sequence RFSYGFQPLS…LQQKGILAGC (192 aa). Asn4306 carries N-linked (GlcNAc...) asparagine glycosylation. Positions 4321-4362 constitute an EGF-like 5 domain; sequence NRQACQPALAAERCGGFAGQCIDRWSSSLCQCGGHLQSPDCS. The Laminin G-like 2 domain occupies 4402–4569; sequence DNQQMRERRA…RYHGKIESGC (168 aa). N-linked (GlcNAc...) asparagine glycans are attached at residues Asn4414, Asn4471, Asn4487, Asn4539, and Asn4550. An intrachain disulfide couples Cys4536 to Cys4569. A helical membrane pass occupies residues 4584-4609; it reads LSIGFTLVIVFFVILVVAILGSYVIY. Topologically, residues 4610 to 5147 are cytoplasmic; it reads RFRGKQEKIG…NGPAAPEEYV (538 aa). An essential for stability of mitochondrial electron chain complexes I and V, and promotes interaction with ND-24 region spans residues 4744 to 4771; the sequence is PEHYDLENASSIAPSDIDIVYHYKGYRE. Disordered stretches follow at residues 4787–4850, 4871–4921, and 4967–5041; these read AYTH…SQQP, TSSS…QTSM, and GDVD…PIPP. Polar residues predominate over residues 4826-4835; that stretch reads SASRTHQSTP. 2 stretches are compositionally biased toward low complexity: residues 4838-4850 and 4891-4918; these read RLSP…SQQP and SPVM…QAQQ. Ser4843 bears the Phosphoserine mark. The segment covering 4972–5008 has biased composition (polar residues); that stretch reads HSSTSTDESGNDSFTCSEIEYDNNSLSGDGKYSTSKS. Ser5054 and Ser5061 each carry phosphoserine. Positions 5113–5147 are disordered; the sequence is PDTNGPSQQQQQQTQVVSTLRMPSSNGPAAPEEYV. The segment covering 5119–5131 has biased composition (low complexity); sequence SQQQQQQTQVVST.

As to quaternary structure, interacts with Fbxl7. Ft-mito interacts with NADH dehydrogenase subunit ND-24 and with ATP synthase subunit ATPsynC. In terms of processing, phosphorylated by fj on Ser/Thr of cadherin domains. Phosphorylation by fj enhances binding to ds. Phosphorylated in the cytoplasmic domain in a dco-dependent manner which is promoted by ds. Post-translationally, proteolytically cleaved to yield stably associated N- and C-terminal fragments. The C-terminal fragment is processed further to release a 68 kDa mitochondrial fragment, Ft-mito.

It localises to the cell membrane. The protein resides in the apical cell membrane. Its subcellular location is the mitochondrion. Functionally, involved in regulation of planar cell polarity in the compound eye where it is required for correct specification of the R3 and R4 photoreceptor cells by regulating Fz activity in the R3/R4 precursor cells. This is likely to occur through creation of an ft gradient so that the equatorial R3/R4 precursor cell has a higher level of ft function than its polar neighbor. Also required for planar cell polarity of wing hairs. Mediates heterophilic cell adhesion in vitro and is required to stabilize ds on the cell surface. Involved in regulation of eye imaginal disk size. Upstream component of the Hippo pathway where it is likely to act as a cell surface receptor involved in regulation of tissue size and is required for the localization and stability of ex. Probably acts as a cell surface receptor for ds. In terms of biological role, regulates mitochondrial electron transport chain integrity and promotes oxidative phosphorylation. This is Cadherin-related tumor suppressor from Drosophila melanogaster (Fruit fly).